A 368-amino-acid polypeptide reads, in one-letter code: Ubl carboxyl-terminal hydrolase 18 (368 aa).

Positions methionine 31–proline 48 are mediates interaction with IFNAR2. The interval proline 48–aspartate 109 is mediates interaction with STAT2. Residues valine 52–threonine 366 enclose the USP domain. Residue cysteine 61 is the Nucleophile of the active site. Residues glutamate 299–glycine 308 form a mediates interaction with STAT2 and necessary for the negative regulation of the type I IFN signaling pathway region. Positions methionine 309–serine 368 are mediates interaction with IFNAR2. The active-site Proton acceptor is histidine 314.

It belongs to the peptidase C19 family. Interacts with STAT2; the interaction is direct. Interacts with IFNAR2; indirectly via STAT2, it negatively regulates the assembly of the ternary interferon-IFNAR1-IFNAR2 complex and inhibits type I interferon signaling. Interacts with STING1. Interacts with USP20.

The catalysed reaction is Thiol-dependent hydrolysis of ester, thioester, amide, peptide and isopeptide bonds formed by the C-terminal Gly of ubiquitin (a 76-residue protein attached to proteins as an intracellular targeting signal).. Functionally, interferon-induced ISG15-specific protease that plays a crucial role for maintaining a proper balance of ISG15-conjugated proteins in cells. Regulates protein ISGylation by efficiently cleaving ISG15 conjugates linked via isopeptide bonds. Regulates T-cell activation and T-helper 17 (Th17) cell differentiation by deubiquitinating TAK1, likely to keep TAK1-TAB complexes in steady conditions. In turn, restricts activation of NF-kappa-B, NFAT, and JNK as well as expression of IL2 in T-cells after TCR activation. Acts as a molecular adapter with USP20 to promote innate antiviral response through deubiquitinating STING1. Involved also in the negative regulation of the inflammatory response triggered by type I interferon. Upon recruitment by STAT2 to the type I interferon receptor subunit IFNAR2 interferes with the assembly of the ternary interferon-IFNAR1-IFNAR2 complex and acts as a negative regulator of the type I interferon signaling pathway. This chain is Ubl carboxyl-terminal hydrolase 18 (Usp18), found in Mus musculus (Mouse).